The sequence spans 354 residues: Uroporphyrinogen decarboxylase (354 aa).

Residues 27 to 31 (RQAGR), aspartate 77, tyrosine 154, serine 209, and histidine 327 contribute to the substrate site.

The protein belongs to the uroporphyrinogen decarboxylase family. In terms of assembly, homodimer.

It localises to the cytoplasm. It catalyses the reaction uroporphyrinogen III + 4 H(+) = coproporphyrinogen III + 4 CO2. Its pathway is porphyrin-containing compound metabolism; protoporphyrin-IX biosynthesis; coproporphyrinogen-III from 5-aminolevulinate: step 4/4. Catalyzes the decarboxylation of four acetate groups of uroporphyrinogen-III to yield coproporphyrinogen-III. The chain is Uroporphyrinogen decarboxylase from Shewanella baltica (strain OS223).